Consider the following 612-residue polypeptide: Zinc metalloproteinase-disintegrin-like HV1 (612 aa).

The first 20 residues, M1–S20, serve as a signal peptide directing secretion. Residues I21–L188 constitute a propeptide that is removed on maturation. A Peptidase M12B domain is found at K200–P396. A glycan (N-linked (GlcNAc...) asparagine) is linked at N219. 3 disulfide bridges follow: C311/C391, C351/C375, and C353/C358. H336 serves as a coordination point for Zn(2+). Residue E337 is part of the active site. 2 residues coordinate Zn(2+): H340 and H346. Residues P404–N489 enclose the Disintegrin domain. 6 residues coordinate Ca(2+): V406, N409, F411, E413, E416, and D419. 14 disulfides stabilise this stretch: C407–C436, C418–C431, C420–C426, C430–C453, C444–C450, C449–C475, C462–C482, C469–C500, C493–C505, C512–C562, C527–C573, C540–C550, C557–C599, and C593–C605. Positions E468–D470 match the D/ECD-tripeptide motif. 5 residues coordinate Ca(2+): D470, M471, D473, D484, and R485. The N-linked (GlcNAc...) asparagine glycan is linked to N502. N609 carries N-linked (GlcNAc...) asparagine glycosylation.

The protein belongs to the venom metalloproteinase (M12B) family. P-III subfamily. P-IIIc sub-subfamily. As to quaternary structure, homodimer; disulfide-linked. It depends on Zn(2+) as a cofactor. Expressed by the venom gland.

The protein resides in the secreted. With respect to regulation, inhibited by EDTA and EGTA. In terms of biological role, snake venom zinc metalloproteinase-disintegrin-like that potently activates prothrombin (F2). Does not elicit any hemorrhagic response. Barely inhibits collagen-induced platelet aggregation. Hydrolyzes the alpha-chain of fibrin and fibrinogen (FGA), without affecting the Bbeta- and gamma-chains. Induces apoptosis in cultured vascular endothelial cells. The sequence is that of Zinc metalloproteinase-disintegrin-like HV1 from Protobothrops flavoviridis (Habu).